The following is a 430-amino-acid chain: Inner membrane transport protein YbaT (430 aa).

Residues 1–14 (MMNTEGNNGNKPLG) lie on the Cytoplasmic side of the membrane. Residues 15–35 (LWNVVSIGIGAMVGAGIFALL) form a helical membrane-spanning segment. Over 36–38 (GQA) the chain is Periplasmic. The chain crosses the membrane as a helical span at residues 39-59 (ALLMEASTWVAFAFGGIVAMF). At 60–88 (SGYAYARLGASYPSNGGIIDFFRRGLGNG) the chain is on the cytoplasmic side. Residues 89 to 109 (VFSLALSLLYLLTLAVSIAMV) form a helical membrane-spanning segment. Topologically, residues 110-128 (ARAFGAYAVQFLHEGSQEE) are periplasmic. A helical transmembrane segment spans residues 129–149 (HLILLYALGIIAVMTLFNSLS). Over 150–157 (NHAVGRLE) the chain is Cytoplasmic. Residues 158 to 178 (VILVGIKMMILLLLIIAGVWS) form a helical membrane-spanning segment. Over 179–192 (LQPAHISVSAPPSS) the chain is Periplasmic. Residues 193 to 213 (GAFFSCIGITFLAYAGFGMMA) traverse the membrane as a helical segment. Residues 214–228 (NAADKVKDPQVIMPR) are Cytoplasmic-facing. A helical membrane pass occupies residues 229-249 (AFLVAIGVTTLLYISLALVLL). Residues 250 to 272 (SDVSALELEKYADTAVAQAASPL) lie on the Periplasmic side of the membrane. The helical transmembrane segment at 273–293 (LGHVGYVIVVIGALLATASAI) threads the bilayer. Topologically, residues 294-325 (NANLFAVFNIMDNMGSERELPKLMNKSLWRQS) are cytoplasmic. The chain crosses the membrane as a helical span at residues 326–346 (TWGNIIVVVLIMLMTAALNLG). A topological domain (periplasmic) is located at residue serine 347. Residues 348-368 (LASVASATFLICYLAVFVVAI) form a helical membrane-spanning segment. Residues 369-379 (RLRHDIHASLP) lie on the Cytoplasmic side of the membrane. A helical membrane pass occupies residues 380-400 (ILIVGTLVMLLVIVGFIYSLW). Residues 401–403 (SQG) lie on the Periplasmic side of the membrane. The chain crosses the membrane as a helical span at residues 404 to 424 (SRALIWIIGSLLLSLIVAMVM). The Cytoplasmic segment spans residues 425–430 (KRNKTV).

It belongs to the amino acid-polyamine-organocation (APC) superfamily.

It localises to the cell inner membrane. Probable amino-acid or metabolite transport protein. The protein is Inner membrane transport protein YbaT (ybaT) of Escherichia coli (strain K12).